Consider the following 178-residue polypeptide: Large ribosomal subunit protein uL6 (178 aa).

The protein belongs to the universal ribosomal protein uL6 family. As to quaternary structure, part of the 50S ribosomal subunit.

Its function is as follows. This protein binds to the 23S rRNA, and is important in its secondary structure. It is located near the subunit interface in the base of the L7/L12 stalk, and near the tRNA binding site of the peptidyltransferase center. The protein is Large ribosomal subunit protein uL6 of Helicobacter pylori (strain Shi470).